The primary structure comprises 307 residues: Transcription factor bHLH127 (307 aa).

Disordered regions lie at residues 41 to 68 (SDPL…LPHQ) and 101 to 155 (PHPQ…AEMH). A compositionally biased stretch (pro residues) spans 110 to 119 (APPPPKPPSS). The bHLH domain maps to 150–199 (RAAEMHNLAERRRREKINERMKTLQQLIPRCNKSTKVSMLEDVIEYVKSL).

Belongs to the bHLH protein family. In terms of assembly, homodimer.

Its subcellular location is the nucleus. The polypeptide is Transcription factor bHLH127 (BHLH127) (Arabidopsis thaliana (Mouse-ear cress)).